Here is a 212-residue protein sequence, read N- to C-terminus: Tetraspanin-31-B (212 aa).

Topologically, residues 1-12 (MVCGGFTCSKNA) are cytoplasmic. A helical membrane pass occupies residues 13–33 (LCALNVVYMLVGVLLIIVAAW). Residues 34–44 (GKGFGIVSSIH) are Extracellular-facing. A helical transmembrane segment spans residues 45 to 65 (IIGGVIAIGVFLLLIAIIGLI). The Cytoplasmic segment spans residues 66 to 72 (GAVSHHQ). Residues 73 to 93 (VMLFIYMVVLILVFIFQFIVS) form a helical membrane-spanning segment. Topologically, residues 94–175 (CSCLAMNRSQ…MLNHADEALK (82 aa)) are extracellular. N-linked (GlcNAc...) asparagine glycans are attached at residues asparagine 100, asparagine 109, asparagine 117, and asparagine 134. Residues 176-196 (ILGGVGLFFSFTEILGVWLAF) form a helical membrane-spanning segment. Residues 197 to 212 (RYRNQKDPRANPSAFL) lie on the Cytoplasmic side of the membrane.

Belongs to the tetraspanin (TM4SF) family.

The protein localises to the membrane. The sequence is that of Tetraspanin-31-B (tspan31-b) from Xenopus laevis (African clawed frog).